The chain runs to 663 residues: MRAHRIDTFLIRENIKLEIIHESNSYFGGEHISIAFRFKHLGSQHELFNYKEKLLTVDKAVEEKLEQQAKVQDDGEGTMENQTWSLKSLLGAFKRTGEPEESVDVDNMKMLNESKMLREKIQKQMYFHQPVTLISGYVQISGVFQYDSEVISESKFKQDEVKMVGLDIVPGHTTNSVLALEDGEHFKGKRNLTNYLNSDYTNVTNGLLFSESGSRGRTGTYNERTLMISNDTSIKTLPLLLIPQTLLFSEISLEPGEVRTFYFKSTKLPKDICPSYSSSKVASINYTLEVGADVLSDDNIEKFSNRVPITIAPYISSNAEQYTSRLDKPAIILKTGNIKELKPRLFTRKVSTASAVSFGRRKSSIIDIDSPLEDNEFVKRVKKNFIELVESNQNVSRDIDELIDLQMGVQFGKDEDSSDPEPNDSHFSNEMVTSAESSLRSDAVTKRRKSYSVRDNISNLEQKMWNDCSLVKSDENSNLLPQLINLQNAYQINRNNETMAKVSLSAPFYKTTDDINLVIELDPITTPLLKVTSLTVSLESFEIINPKYKTEGKGIGSKPKGNSVYEKHFICFDECKSVSVKLLPPRSPTNQITGQFKTDVFQHKWMIGLKFVIIAKTESITLDQFYEDKKGILFHSKENLEGEEFTCYVPIPILCTSEDFMGW.

Phosphoserine is present on residues Ser351, Ser354, Ser357, Ser363, Ser364, and Ser370. Residues 412–443 (GKDEDSSDPEPNDSHFSNEMVTSAESSLRSDA) form a disordered region. Polar residues predominate over residues 426–440 (HFSNEMVTSAESSLR).

It belongs to the RGP1 family. Forms a complex with RIC1.

The protein resides in the golgi apparatus. The RIC1-RGP1 complex acts as a guanine nucleotide exchange factor (GEF), which activates YPT6 by exchanging bound GDP for free GTP. It is thereby required for efficient fusion of endosome-derived vesicles with the Golgi. The RIC1-RGP1 participates in the recycling of SNC1, presumably by mediating fusion of endosomal vesicles with the Golgi compartment. In terms of biological role, required for proper mitotic growth. The chain is Guanine nucleotide exchange factor subunit RGP1 from Saccharomyces cerevisiae (strain ATCC 204508 / S288c) (Baker's yeast).